The chain runs to 599 residues: Beta-glucuronidase (599 aa).

The D-glucuronate site is built by aspartate 160 and asparagine 407. Glutamate 408 serves as the catalytic Proton donor. D-glucuronate contacts are provided by asparagine 462, tyrosine 468, glutamate 501, tryptophan 546, and lysine 565. Catalysis depends on glutamate 501, which acts as the Nucleophile. An N-K motif motif is present at residues 563–565 (NHK).

It belongs to the glycosyl hydrolase 2 family.

It carries out the reaction a beta-D-glucuronoside + H2O = D-glucuronate + an alcohol. With respect to regulation, inhibited by a set of synthetic compounds like thio-urea derivatives and analogs. Inhibitors of gut microbial beta-glucuronidases are expected to block the reactivation of glucuronidated cancer drugs, and to alleviate drug-induced GI toxicity. Its function is as follows. Displays beta-glucuronidase activity with the artificial substrate p-nitrophenyl-beta-D-glucuronide (PNPG). Is likely capable of scavenging glucuronate from a range of chemically distinct xenobiotic and endobiotic glucuronides present in the gastrointestinal (GI) tract, to be able to utilize these diverse sources of carbon. As part of the GI microbiome, this enzyme would be able to reactivate glucuronide drug conjugates, such reactivated compounds can significantly damage the GI tract. This Streptococcus agalactiae serotype V (strain ATCC BAA-611 / 2603 V/R) protein is Beta-glucuronidase.